A 342-amino-acid chain; its full sequence is N-acetyl-gamma-glutamyl-phosphate reductase (342 aa).

Residue C147 is part of the active site.

The protein belongs to the NAGSA dehydrogenase family. Type 1 subfamily.

The protein localises to the cytoplasm. The catalysed reaction is N-acetyl-L-glutamate 5-semialdehyde + phosphate + NADP(+) = N-acetyl-L-glutamyl 5-phosphate + NADPH + H(+). It participates in amino-acid biosynthesis; L-arginine biosynthesis; N(2)-acetyl-L-ornithine from L-glutamate: step 3/4. Functionally, catalyzes the NADPH-dependent reduction of N-acetyl-5-glutamyl phosphate to yield N-acetyl-L-glutamate 5-semialdehyde. This is N-acetyl-gamma-glutamyl-phosphate reductase from Campylobacter jejuni subsp. jejuni serotype O:23/36 (strain 81-176).